The sequence spans 115 residues: U3-lycotoxin-Ls1v (115 aa).

An N-terminal signal peptide occupies residues 1-20 (MKFVLLFGVLLVTLFSHSSA). Residues 21–44 (EMLDDFDQADEDELLSLIEKEEAR) constitute a propeptide that is removed on maturation. 4 cysteine pairs are disulfide-bonded: Cys48–Cys63, Cys55–Cys72, Cys62–Cys87, and Cys74–Cys85.

The protein belongs to the neurotoxin 19 (CSTX) family. 01 subfamily. Expressed by the venom gland.

It localises to the secreted. This chain is U3-lycotoxin-Ls1v, found in Lycosa singoriensis (Wolf spider).